Here is a 34-residue protein sequence, read N- to C-terminus: Potassium channel toxin alpha-KTx 6.13 (34 aa).

4 cysteine pairs are disulfide-bonded: cysteine 3-cysteine 24, cysteine 9-cysteine 29, cysteine 13-cysteine 31, and cysteine 19-cysteine 34. At cysteine 34 the chain carries Cysteine amide.

Belongs to the short scorpion toxin superfamily. Potassium channel inhibitor family. Alpha-KTx 06 subfamily. In terms of tissue distribution, expressed by the venom gland.

It is found in the secreted. Functionally, antagonist of Kv1/KCNA potassium channels. Shows a weak interaction with muscle-type nicotinic acetylcholine receptors (nAChR), since it inhibits alpha-bungarotoxin binding to both muscle-type nAChR from T.californica (IC(50)=490 nM). This suggests it probably weakly inhibits nAChR. The chain is Potassium channel toxin alpha-KTx 6.13 from Heterometrus spinifer (Asia giant forest scorpion).